We begin with the raw amino-acid sequence, 123 residues long: uncharacterized protein (123 aa).

Residues 34 to 53 traverse the membrane as a helical segment; that stretch reads LPFFFLFLGNLGKFFFLWPL.

It is found in the membrane. This is an uncharacterized protein from Saccharomyces cerevisiae (strain ATCC 204508 / S288c) (Baker's yeast).